A 364-amino-acid polypeptide reads, in one-letter code: Fructose-1,6-bisphosphatase class 1 3 (364 aa).

Residues E101, D123, L125, and D126 each contribute to the Mg(2+) site. Residues 126–129 and N218 contribute to the substrate site; that span reads DGSS. E290 is a binding site for Mg(2+).

It belongs to the FBPase class 1 family. Homotetramer. Mg(2+) serves as cofactor.

The protein localises to the cytoplasm. The catalysed reaction is beta-D-fructose 1,6-bisphosphate + H2O = beta-D-fructose 6-phosphate + phosphate. The protein operates within carbohydrate biosynthesis; gluconeogenesis. This chain is Fructose-1,6-bisphosphatase class 1 3, found in Cupriavidus necator (strain ATCC 17699 / DSM 428 / KCTC 22496 / NCIMB 10442 / H16 / Stanier 337) (Ralstonia eutropha).